A 142-amino-acid polypeptide reads, in one-letter code: Large ribosomal subunit protein uL11 (142 aa).

It belongs to the universal ribosomal protein uL11 family. As to quaternary structure, part of the ribosomal stalk of the 50S ribosomal subunit. Interacts with L10 and the large rRNA to form the base of the stalk. L10 forms an elongated spine to which L12 dimers bind in a sequential fashion forming a multimeric L10(L12)X complex. One or more lysine residues are methylated.

Its function is as follows. Forms part of the ribosomal stalk which helps the ribosome interact with GTP-bound translation factors. The chain is Large ribosomal subunit protein uL11 from Mycobacterium ulcerans (strain Agy99).